The sequence spans 78 residues: Esculentin-2PLa (78 aa).

An N-terminal signal peptide occupies residues 1–22; it reads MFTTKKSMLLLFFLGTISLSLC. Residues 23–39 constitute a propeptide that is removed on maturation; that stretch reads EEERGADEEEGDGEKLM. The cysteines at positions 72 and 78 are disulfide-linked.

As to expression, expressed by the skin glands.

The protein localises to the secreted. In terms of biological role, antimicrobial activity against the Gram-negative bacterium E.coli, the Gram-positive bacterium S.aureus and the yeast C.albicans. In Lithobates palustris (Pickerel frog), this protein is Esculentin-2PLa.